The chain runs to 63 residues: Keratin-associated protein 19-7 (63 aa).

Belongs to the KRTAP type 19 family. In terms of assembly, interacts with hair keratins.

Its function is as follows. In the hair cortex, hair keratin intermediate filaments are embedded in an interfilamentous matrix, consisting of hair keratin-associated proteins (KRTAP), which are essential for the formation of a rigid and resistant hair shaft through their extensive disulfide bond cross-linking with abundant cysteine residues of hair keratins. The matrix proteins include the high-sulfur and high-glycine-tyrosine keratins. The sequence is that of Keratin-associated protein 19-7 (KRTAP19-7) from Homo sapiens (Human).